The sequence spans 200 residues: Glycerol-3-phosphate acyltransferase (200 aa).

The next 5 membrane-spanning stretches (helical) occupy residues M1 to V21, V51 to A71, V84 to F104, I116 to A136, and F159 to L179.

This sequence belongs to the PlsY family. In terms of assembly, probably interacts with PlsX.

The protein resides in the cell inner membrane. It carries out the reaction an acyl phosphate + sn-glycerol 3-phosphate = a 1-acyl-sn-glycero-3-phosphate + phosphate. Its pathway is lipid metabolism; phospholipid metabolism. In terms of biological role, catalyzes the transfer of an acyl group from acyl-phosphate (acyl-PO(4)) to glycerol-3-phosphate (G3P) to form lysophosphatidic acid (LPA). This enzyme utilizes acyl-phosphate as fatty acyl donor, but not acyl-CoA or acyl-ACP. The protein is Glycerol-3-phosphate acyltransferase of Nitrosomonas eutropha (strain DSM 101675 / C91 / Nm57).